The following is a 467-amino-acid chain: ATP synthase subunit beta (467 aa).

150–157 (GGAGVGKT) contacts ATP.

The protein belongs to the ATPase alpha/beta chains family. As to quaternary structure, F-type ATPases have 2 components, CF(1) - the catalytic core - and CF(0) - the membrane proton channel. CF(1) has five subunits: alpha(3), beta(3), gamma(1), delta(1), epsilon(1). CF(0) has three main subunits: a(1), b(2) and c(9-12). The alpha and beta chains form an alternating ring which encloses part of the gamma chain. CF(1) is attached to CF(0) by a central stalk formed by the gamma and epsilon chains, while a peripheral stalk is formed by the delta and b chains.

Its subcellular location is the cell inner membrane. The catalysed reaction is ATP + H2O + 4 H(+)(in) = ADP + phosphate + 5 H(+)(out). Produces ATP from ADP in the presence of a proton gradient across the membrane. The catalytic sites are hosted primarily by the beta subunits. This is ATP synthase subunit beta from Aliivibrio fischeri (strain ATCC 700601 / ES114) (Vibrio fischeri).